The chain runs to 321 residues: Beta-1,3-N-acetylglucosaminyltransferase manic fringe (321 aa).

At 1–7 (MQCRLPR) the chain is on the cytoplasmic side. Residues 8 to 27 (GLAGALLTLLCMGLLCLRYH) form a helical; Signal-anchor for type II membrane protein membrane-spanning segment. The Lumenal segment spans residues 28-321 (LNLSPQRVQE…TPWCPQLGAR (294 aa)). Arg-70 is a substrate binding site. The N-linked (GlcNAc...) asparagine glycan is linked to Asn-109. 2 cysteine pairs are disulfide-bonded: Cys-110-Cys-121 and Cys-139-Cys-202. Residue Asp-143 coordinates substrate. Asp-144 provides a ligand contact to Mn(2+). A glycan (N-linked (GlcNAc...) asparagine) is linked at Asn-185. Asp-232 is an active-site residue. Position 256 (His-256) interacts with Mn(2+). Cys-306 and Cys-315 are joined by a disulfide.

It belongs to the glycosyltransferase 31 family. Mn(2+) serves as cofactor.

The protein localises to the golgi apparatus membrane. It carries out the reaction 3-O-(alpha-L-fucosyl)-L-threonyl-[EGF-like domain protein] + UDP-N-acetyl-alpha-D-glucosamine = 3-O-(N-acetyl-beta-D-glucosaminyl-(1-&gt;3)-alpha-L-fucosyl)-L-threonyl-[EGF-like domain protein] + UDP + H(+). It catalyses the reaction 3-O-(alpha-L-fucosyl)-L-seryl-[EGF-like domain protein] + UDP-N-acetyl-alpha-D-glucosamine = 3-O-(N-acetyl-beta-D-glucosaminyl-(1-&gt;3)-alpha-L-fucosyl)-L-seryl-[EGF-like domain protein] + UDP + H(+). Functionally, glycosyltransferase that initiates the elongation of O-linked fucose residues attached to EGF-like repeats in the extracellular domain of Notch molecules. Modulates NOTCH1 activity by modifying O-fucose residues at specific EGF-like domains resulting in inhibition of NOTCH1 activation by JAG1 and enhancement of NOTCH1 activation by DLL1 via an increase in its binding to DLL1. The polypeptide is Beta-1,3-N-acetylglucosaminyltransferase manic fringe (MFNG) (Pan troglodytes (Chimpanzee)).